Reading from the N-terminus, the 260-residue chain is Acetylglutamate kinase (260 aa).

Residues 46 to 47 (GG), arginine 68, and asparagine 160 contribute to the substrate site.

It belongs to the acetylglutamate kinase family. ArgB subfamily.

The protein resides in the cytoplasm. The catalysed reaction is N-acetyl-L-glutamate + ATP = N-acetyl-L-glutamyl 5-phosphate + ADP. Its pathway is amino-acid biosynthesis; L-arginine biosynthesis; N(2)-acetyl-L-ornithine from L-glutamate: step 2/4. Its function is as follows. Catalyzes the ATP-dependent phosphorylation of N-acetyl-L-glutamate. This Shewanella sp. (strain W3-18-1) protein is Acetylglutamate kinase.